Consider the following 204-residue polypeptide: AFG2-interacting ribosome maturation factor (204 aa).

In terms of assembly, part of the 55LCC heterohexameric ATPase complex. Does not associate with pre-60S ribosomal particles.

It localises to the nucleus. It is found in the cytoplasm. Its function is as follows. Part of the 55LCC heterohexameric ATPase complex which is chromatin-associated and promotes replisome proteostasis to maintain replication fork progression and genome stability. Required for replication fork progression, sister chromatid cohesion, and chromosome stability. The ATPase activity is specifically enhanced by replication fork DNA and is coupled to cysteine protease-dependent cleavage of replisome substrates in response to replication fork damage. Uses ATPase activity to process replisome substrates in S-phase, facilitating their proteolytic turnover from chromatin to ensure DNA replication and mitotic fidelity. Involved in the cytoplasmic maturation steps of pre-60S ribosomal particles by promoting the release of shuttling protein RSL24D1/RLP24 from the pre-ribosomal particles. This Xenopus tropicalis (Western clawed frog) protein is AFG2-interacting ribosome maturation factor (airim).